A 568-amino-acid polypeptide reads, in one-letter code: Urease subunit alpha (568 aa).

One can recognise a Urease domain in the interval 131-568 (GGMDAHIHFI…LPLAQRYFLY (438 aa)). 3 residues coordinate Ni(2+): histidine 136, histidine 138, and lysine 219. N6-carboxylysine is present on lysine 219. Histidine 221 is a substrate binding site. Histidine 248 and histidine 274 together coordinate Ni(2+). Residue histidine 322 is the Proton donor of the active site. Ni(2+) is bound at residue aspartate 362.

Belongs to the metallo-dependent hydrolases superfamily. Urease alpha subunit family. In terms of assembly, heterotrimer of UreA (gamma), UreB (beta) and UreC (alpha) subunits. Three heterotrimers associate to form the active enzyme. Ni cation is required as a cofactor. In terms of processing, carboxylation allows a single lysine to coordinate two nickel ions.

The protein localises to the cytoplasm. The enzyme catalyses urea + 2 H2O + H(+) = hydrogencarbonate + 2 NH4(+). Its pathway is nitrogen metabolism; urea degradation; CO(2) and NH(3) from urea (urease route): step 1/1. The sequence is that of Urease subunit alpha from Cereibacter sphaeroides (strain ATCC 17023 / DSM 158 / JCM 6121 / CCUG 31486 / LMG 2827 / NBRC 12203 / NCIMB 8253 / ATH 2.4.1.) (Rhodobacter sphaeroides).